The primary structure comprises 234 residues: UPF0502 protein Bphy_5360 (234 aa).

Belongs to the UPF0502 family.

The sequence is that of UPF0502 protein Bphy_5360 from Paraburkholderia phymatum (strain DSM 17167 / CIP 108236 / LMG 21445 / STM815) (Burkholderia phymatum).